Reading from the N-terminus, the 130-residue chain is Methylglyoxal synthase (130 aa).

In terms of domain architecture, MGS-like spans 1-130 (MSKPRIALIA…DLARTMQDVC (130 aa)). Substrate contacts are provided by residues His-11, Lys-15, 37-40 (TGTT), and 57-58 (SG). Asp-63 (proton donor/acceptor) is an active-site residue. His-90 contributes to the substrate binding site.

This sequence belongs to the methylglyoxal synthase family.

It catalyses the reaction dihydroxyacetone phosphate = methylglyoxal + phosphate. Its function is as follows. Catalyzes the formation of methylglyoxal from dihydroxyacetone phosphate. This Burkholderia multivorans (strain ATCC 17616 / 249) protein is Methylglyoxal synthase.